The chain runs to 628 residues: Netrin-4 (628 aa).

Residues 1–18 form the signal peptide; the sequence is MGSCARLLLLWGCTVVAA. Residues 30-261 enclose the Laminin N-terminal domain; sequence CEKACNPRMG…AIYDFIVKGS (232 aa). Residues Asn-56 and Asn-163 are each glycosylated (N-linked (GlcNAc...) asparagine). 12 cysteine pairs are disulfide-bonded: Cys-262/Cys-271, Cys-264/Cys-293, Cys-295/Cys-304, Cys-307/Cys-329, Cys-332/Cys-341, Cys-334/Cys-359, Cys-362/Cys-371, Cys-374/Cys-392, Cys-395/Cys-413, Cys-397/Cys-420, Cys-422/Cys-431, and Cys-434/Cys-446. Laminin EGF-like domains are found at residues 262–331, 332–394, and 395–448; these read CFCN…ECRT, CKCN…ACKP, and CSCH…GCRP. Asn-353 carries an N-linked (GlcNAc...) asparagine glycan. Residue Asn-483 is glycosylated (N-linked (GlcNAc...) asparagine). Disulfide bonds link Cys-506–Cys-576 and Cys-520–Cys-627. The NTR domain maps to 506–627; the sequence is CECKEQTLGN…KVMDILKREC (122 aa).

May form a homodimer. Expressed in kidney, spleen, mammary gland, aorta, heart, ovary, prostate and fetal spleen.

Its subcellular location is the secreted. It localises to the extracellular space. The protein localises to the extracellular matrix. It is found in the basement membrane. In terms of biological role, may play an important role in neural, kidney and vascular development. Promotes neurite elongation from olfactory bulb explants. The polypeptide is Netrin-4 (NTN4) (Homo sapiens (Human)).